We begin with the raw amino-acid sequence, 525 residues long: ALBINO3-like protein 2, chloroplastic (525 aa).

The next 4 helical transmembrane spans lie at 99 to 119, 167 to 187, 217 to 237, and 262 to 282; these read WMII…LLIL, LWFF…MASI, FGPV…QISF, and ILSV…LVYW. 4 TPR repeats span residues 346 to 379, 380 to 413, 425 to 458, and 467 to 500; these read PEEL…DPGY, VRGL…LLDE, MLAS…REPG, and FEAL…NPAY.

The protein belongs to the OXA1/ALB3/YidC (TC 2.A.9.2) family.

The protein localises to the plastid. The protein resides in the chloroplast thylakoid membrane. Functionally, probably required for the insertion of integral membrane proteins into the chloroplast thylakoid membranes. The sequence is that of ALBINO3-like protein 2, chloroplastic (ALB3L2) from Arabidopsis thaliana (Mouse-ear cress).